The sequence spans 727 residues: Sodium-dependent neutral amino acid transporter SLC6A17 (727 aa).

At 1-68 (MPKNSKVTQR…DRPAWNSKLQ (68 aa)) the chain is on the cytoplasmic side. A phosphoserine mark is found at S13 and S20. The helical transmembrane segment at 69-89 (YILAQIGFSVGLGNIWRFPYL) threads the bilayer. Topologically, residues 90-96 (CQKNGGG) are extracellular. The chain crosses the membrane as a helical span at residues 97–116 (AYLVPYLVLLIIIGIPLFFL). At 117–140 (ELAVGQRIRRGSIGVWHYVCPRLG) the chain is on the cytoplasmic side. Residues 141-161 (GIGFSSCIVCLFVGLYYNVII) traverse the membrane as a helical segment. Residues 162 to 224 (GWSVFYFFKS…NSISESGGLN (63 aa)) lie on the Extracellular side of the membrane. An N-linked (GlcNAc...) asparagine glycan is attached at N186. The chain crosses the membrane as a helical span at residues 225–243 (WKMTVCLLVAWSIVGMAVV). At 244–251 (KGIQSSGK) the chain is on the cytoplasmic side. A helical membrane pass occupies residues 252–269 (VMYFSSLFPYVVLACFLV). The Extracellular portion of the chain corresponds to 270–304 (RGLLLRGAVDGILHMFTPKLDKMLDPQVWREAATQ). A helical transmembrane segment spans residues 305 to 322 (VFFALGLGFGGVIAFSSY). Over 323–333 (NKQDNNCHFDA) the chain is Cytoplasmic. A helical membrane pass occupies residues 334 to 355 (ALVSFINFFTSVLATLVVFAVL). Residues 356-451 (GFKANIMNEK…FIAFTEAMTH (96 aa)) are Extracellular-facing. Y377 is subject to Phosphotyrosine. An N-linked (GlcNAc...) asparagine glycan is attached at N393. The chain crosses the membrane as a helical span at residues 452–471 (FPASPFWSVMFFLMLINLGL). At 472–494 (GSMIGTMAGITTPIIDTFKVPKE) the chain is on the cytoplasmic side. The chain crosses the membrane as a helical span at residues 495–513 (MFTVGCCVFAFFVGLLFVQ). The Extracellular portion of the chain corresponds to 514–528 (RSGNYFVTMFDDYSA). The chain crosses the membrane as a helical span at residues 529–549 (TLPLTVIVILENIAVAWIYGT). Residues 550-569 (KKFMQELTEMLGFRPYRFYF) lie on the Cytoplasmic side of the membrane. Residues 570–591 (YMWKFVSPLCMAVLTTASIIQL) traverse the membrane as a helical segment. At 592-618 (GVSPPGYSAWIKEEAAERYLYFPNWAM) the chain is on the extracellular side. A helical membrane pass occupies residues 619–641 (ALLITLIAVATLPIPVVFILRHF). Topologically, residues 642-727 (HLLSDGSNTL…LLASTPESEL (86 aa)) are cytoplasmic. S665 and S701 each carry phosphoserine. The interval 680–727 (VPSEAPSPMPTHRSYLGPGSTSPLESSSHPNGRYGSGYLLASTPESEL) is disordered. Residues 698 to 709 (GSTSPLESSSHP) show a composition bias toward polar residues.

Belongs to the sodium:neurotransmitter symporter (SNF) (TC 2.A.22) family. As to expression, found exclusively in the central nervous system and is more abundant in the cerebellum and the cerebral cortex. Expressed in PC-12 cell line.

The protein localises to the cytoplasmic vesicle. It is found in the secretory vesicle. The protein resides in the synaptic vesicle membrane. Its subcellular location is the postsynapse. It localises to the presynapse. It carries out the reaction L-proline(in) + Na(+)(in) = L-proline(out) + Na(+)(out). The enzyme catalyses L-leucine(in) + Na(+)(in) = L-leucine(out) + Na(+)(out). The catalysed reaction is glycine(in) + Na(+)(in) = glycine(out) + Na(+)(out). It catalyses the reaction L-alanine(in) + Na(+)(in) = L-alanine(out) + Na(+)(out). It carries out the reaction L-glutamine(in) + Na(+)(in) = L-glutamine(out) + Na(+)(out). In terms of biological role, synaptic vesicle transporter with apparent selectivity for neutral amino acids. The transport is sodium-coupled but chloride-independent, likely driven by the proton electrochemical gradient generated by vacuolar H(+)-ATPase in an overall electrogenic mechanism. May contribute to the synaptic uptake of neurotransmitter precursors in a process coupled in part to vesicle exocytosis. In Rattus norvegicus (Rat), this protein is Sodium-dependent neutral amino acid transporter SLC6A17.